The chain runs to 184 residues: ATP synthase subunit b, chloroplastic (184 aa).

A helical membrane pass occupies residues 27–49; that stretch reads LATNPINLSVVLGVLIFFGKGVL.

It belongs to the ATPase B chain family. In terms of assembly, F-type ATPases have 2 components, F(1) - the catalytic core - and F(0) - the membrane proton channel. F(1) has five subunits: alpha(3), beta(3), gamma(1), delta(1), epsilon(1). F(0) has four main subunits: a(1), b(1), b'(1) and c(10-14). The alpha and beta chains form an alternating ring which encloses part of the gamma chain. F(1) is attached to F(0) by a central stalk formed by the gamma and epsilon chains, while a peripheral stalk is formed by the delta, b and b' chains.

It is found in the plastid. It localises to the chloroplast thylakoid membrane. In terms of biological role, f(1)F(0) ATP synthase produces ATP from ADP in the presence of a proton or sodium gradient. F-type ATPases consist of two structural domains, F(1) containing the extramembraneous catalytic core and F(0) containing the membrane proton channel, linked together by a central stalk and a peripheral stalk. During catalysis, ATP synthesis in the catalytic domain of F(1) is coupled via a rotary mechanism of the central stalk subunits to proton translocation. Functionally, component of the F(0) channel, it forms part of the peripheral stalk, linking F(1) to F(0). This Atropa belladonna (Belladonna) protein is ATP synthase subunit b, chloroplastic.